The primary structure comprises 181 residues: Trans-acting factor D (181 aa).

In terms of biological role, plays a role in 2-micron plasmid partitioning. Antagonizes transcriptional repression of recombinase FLP by REP1-REP2. Regulates both stability and copy number of the plasmid by blocking the formation of the REP1-REP2 repressor complex. The protein is Trans-acting factor D of Saccharomyces cerevisiae (strain ATCC 204508 / S288c) (Baker's yeast).